The following is a 793-amino-acid chain: Sucrose synthase (793 aa).

The GT-B glycosyltransferase stretch occupies residues 259-738 (MILNIAIISP…AIKRVTEKYS (480 aa)).

Belongs to the glycosyltransferase 1 family. As to quaternary structure, homotetramer.

The enzyme catalyses an NDP-alpha-D-glucose + D-fructose = a ribonucleoside 5'-diphosphate + sucrose + H(+). Functionally, catalyzes the reversible conversion of sucrose and a nucleotide disphosphate (NDP) into fructose and NDP-glucose; although the reaction is freely reversible in vitro, the physiological reaction seems to be sucrose cleavage. Unlike characterized plant enzymes prefers ADP as a cosubstrate, whereas plants prefer UDP. Its preference for ADP over UDP suggests it may directly link sucrose and glycogen metabolism. The polypeptide is Sucrose synthase (Melioribacter roseus (strain JCM 17771 / P3M-2)).